We begin with the raw amino-acid sequence, 251 residues long: Probable transcriptional regulatory protein SYNPCC7002_A0851 (251 aa).

One can recognise a Response regulatory domain in the interval 20 to 141; sequence RILVVEDEAV…ELVARCRALL (122 aa). D76 is modified (4-aspartylphosphate). The segment at residues 153 to 251 is a DNA-binding region (ompR/PhoB-type); it reads NSVRQFKDIS…TVRGFGYRFG (99 aa).

In terms of processing, phosphorylation.

The protein is Probable transcriptional regulatory protein SYNPCC7002_A0851 of Picosynechococcus sp. (strain ATCC 27264 / PCC 7002 / PR-6) (Agmenellum quadruplicatum).